The chain runs to 78 residues: Acyl carrier protein (78 aa).

One can recognise a Carrier domain in the interval 2-77 (SNIEQQVKKI…LAIDYINAHN (76 aa)). Position 37 is an O-(pantetheine 4'-phosphoryl)serine (Ser-37).

The protein belongs to the acyl carrier protein (ACP) family. 4'-phosphopantetheine is transferred from CoA to a specific serine of apo-ACP by AcpS. This modification is essential for activity because fatty acids are bound in thioester linkage to the sulfhydryl of the prosthetic group.

The protein resides in the cytoplasm. The protein operates within lipid metabolism; fatty acid biosynthesis. Carrier of the growing fatty acid chain in fatty acid biosynthesis. The polypeptide is Acyl carrier protein (Neisseria gonorrhoeae (strain ATCC 700825 / FA 1090)).